We begin with the raw amino-acid sequence, 336 residues long: UDP-N-acetylenolpyruvoylglucosamine reductase (336 aa).

An FAD-binding PCMH-type domain is found at 1-178; it reads MAHSLQTLHT…TTVHLALPKE (178 aa). R154 is a catalytic residue. S222 acts as the Proton donor in catalysis. E318 is a catalytic residue.

Belongs to the MurB family. FAD is required as a cofactor.

The protein resides in the cytoplasm. It carries out the reaction UDP-N-acetyl-alpha-D-muramate + NADP(+) = UDP-N-acetyl-3-O-(1-carboxyvinyl)-alpha-D-glucosamine + NADPH + H(+). It participates in cell wall biogenesis; peptidoglycan biosynthesis. Its function is as follows. Cell wall formation. The protein is UDP-N-acetylenolpyruvoylglucosamine reductase of Pseudoalteromonas translucida (strain TAC 125).